The following is a 212-amino-acid chain: MTQEVLEAVKEAKEQSKPRNFTQSVDMIVNIRDLDVKKPENRFNEEVTLPNGRGKEVKIGVIADGELIVQAKDAGVALVINKADLEELGKDRKAAKKAANSVDFFIAQADMMPLVGRFLGPILGPRNKMPKPVPASIKLDPLLERLQSTVKVGIKQQPAIQIIVGSQDMSDEDLAENIETVLTVLDRHLDKGRNQIKSMFIKTTMGPIVRVI.

The protein belongs to the universal ribosomal protein uL1 family. Part of the 50S ribosomal subunit.

Functionally, binds directly to 23S rRNA. Probably involved in E site tRNA release. In terms of biological role, protein L1 is also a translational repressor protein, it controls the translation of its operon by binding to its mRNA. The protein is Large ribosomal subunit protein uL1 of Methanobrevibacter smithii (strain ATCC 35061 / DSM 861 / OCM 144 / PS).